Consider the following 389-residue polypeptide: Indole-3-acetate monooxygenase (389 aa).

Belongs to the HpaH/HsaA monooxygenase family.

The enzyme catalyses (indol-3-yl)acetate + NADH + O2 + H(+) = 2-hydroxy-(1H-indol-3-yl)acetate + NAD(+) + H2O. It carries out the reaction indole + NADH + O2 + H(+) = indoxyl + NAD(+) + H2O. In terms of biological role, involved in the degradation of the plant hormone indole-3-acetic acid (IAA). Catalyzes the first step of the pathway, the conversion of IAA to 2-hydroxy-IAA (2-OH-IAA). Can also convert indole to indoxyl, which spontaneously dimerizes in the presence of oxygen to form the blue pigment indigo. The sequence is that of Indole-3-acetate monooxygenase from Pseudomonas putida (Arthrobacter siderocapsulatus).